Consider the following 340-residue polypeptide: Glycerol-3-phosphate dehydrogenase [NAD(P)+] (340 aa).

NADPH-binding residues include serine 14, phenylalanine 15, arginine 35, and lysine 108. Lysine 108 and glycine 136 together coordinate sn-glycerol 3-phosphate. An NADPH-binding site is contributed by alanine 140. Residues lysine 191, aspartate 244, serine 254, arginine 255, and asparagine 256 each coordinate sn-glycerol 3-phosphate. The active-site Proton acceptor is lysine 191. Arginine 255 provides a ligand contact to NADPH. NADPH contacts are provided by valine 279 and glutamate 281.

This sequence belongs to the NAD-dependent glycerol-3-phosphate dehydrogenase family.

It is found in the cytoplasm. The catalysed reaction is sn-glycerol 3-phosphate + NAD(+) = dihydroxyacetone phosphate + NADH + H(+). It carries out the reaction sn-glycerol 3-phosphate + NADP(+) = dihydroxyacetone phosphate + NADPH + H(+). It functions in the pathway membrane lipid metabolism; glycerophospholipid metabolism. Functionally, catalyzes the reduction of the glycolytic intermediate dihydroxyacetone phosphate (DHAP) to sn-glycerol 3-phosphate (G3P), the key precursor for phospholipid synthesis. This is Glycerol-3-phosphate dehydrogenase [NAD(P)+] from Ectopseudomonas mendocina (strain ymp) (Pseudomonas mendocina).